Consider the following 487-residue polypeptide: Lysophospholipid acyltransferase 5 (487 aa).

Residue A2 is modified to N-acetylalanine. Helical transmembrane passes span 44 to 64, 84 to 104, 111 to 131, and 180 to 200; these read LIFS…YLFY, FNFG…FLIL, VTAV…GYYY, and GVPS…FLVG. N-linked (GlcNAc...) asparagine glycosylation is present at N225. 2 helical membrane passes run 236-256 and 285-305; these read LGLV…DDYL and VTCW…FNGF. N308 and N331 each carry an N-linked (GlcNAc...) asparagine glycan. Active-site residues include N338 and H374. 3 consecutive transmembrane segments (helical) span residues 364-384, 422-442, and 453-473; these read GLSL…LICF, LVQQ…FCLF, and SIYF…PYIH. Positions 484 to 487 match the Di-lysine motif motif; it reads KKRE.

Belongs to the membrane-bound acyltransferase family. Detected ubiquitously, with high expression levels in small intestine, brown adipose tissue, liver, kidney and testis. Expressed in liver and both proximal and distal small intestine (at protein level). Expressed in peritoneal macrophages.

Its subcellular location is the endoplasmic reticulum membrane. The catalysed reaction is a 1-acyl-sn-glycero-3-phosphocholine + an acyl-CoA = a 1,2-diacyl-sn-glycero-3-phosphocholine + CoA. It carries out the reaction a 1-acyl-sn-glycero-3-phosphoethanolamine + an acyl-CoA = a 1,2-diacyl-sn-glycero-3-phosphoethanolamine + CoA. It catalyses the reaction a 1-acyl-sn-glycero-3-phospho-L-serine + an acyl-CoA = a 1,2-diacyl-sn-glycero-3-phospho-L-serine + CoA. The enzyme catalyses (9Z,12Z)-octadecadienoyl-CoA + a 1-acyl-sn-glycero-3-phosphocholine = 1-acyl-2-(9Z,12Z)-octadecadienoyl-sn-glycero-3-phosphocholine + CoA. The catalysed reaction is (5Z,8Z,11Z,14Z)-eicosatetraenoyl-CoA + a 1-acyl-sn-glycero-3-phosphocholine = 1-acyl-2-(5Z,8Z,11Z,14Z-eicosatetraenoyl)-sn-glycero-3-phosphocholine + CoA. It carries out the reaction dodecanoyl-CoA + 1-hexadecanoyl-sn-glycero-3-phosphocholine = 1-hexadecanoyl-2-dodecanoyl-sn-glycero-3-phosphocholine + CoA. It catalyses the reaction octadecanoyl-CoA + 1-hexadecanoyl-sn-glycero-3-phosphocholine = 1-hexadecanoyl-2-octadecanoyl-sn-glycero-3-phosphocholine + CoA. The enzyme catalyses 1-dodecanoyl-sn-glycero-3-phosphocholine + hexadecanoyl-CoA = 1-dodecanoyl-2-hexadecanoyl-sn-glycero-3-phosphocholine + CoA. The catalysed reaction is 1-tetradecanoyl-sn-glycero-3-phosphocholine + hexadecanoyl-CoA = 1-tetradecanoyl-2-hexadecanoyl-sn-glycero-3-phosphocholine + CoA. It carries out the reaction 1-hexadecanoyl-sn-glycero-3-phosphocholine + hexadecanoyl-CoA = 1,2-dihexadecanoyl-sn-glycero-3-phosphocholine + CoA. It catalyses the reaction 1-octadecanoyl-sn-glycero-3-phosphocholine + hexadecanoyl-CoA = 1-octadecanoyl-2-hexadecanoyl-sn-glycero-3-phosphocholine + CoA. The enzyme catalyses 1-(9Z-octadecenoyl)-sn-glycero-3-phosphocholine + hexadecanoyl-CoA = 1-(9Z-octadecenoyl)-2-hexadecanoyl-sn-glycero-3-phosphocholine + CoA. The catalysed reaction is (9Z)-hexadecenoyl-CoA + 1-hexadecanoyl-sn-glycero-3-phosphocholine = 1-hexadecanoyl-2-(9Z-hexadecenoyl)-sn-glycero-3-phosphocholine + CoA. It carries out the reaction 1-hexadecanoyl-sn-glycero-3-phosphocholine + (9Z)-octadecenoyl-CoA = 1-hexadecanoyl-2-(9Z-octadecenoyl)-sn-glycero-3-phosphocholine + CoA. It catalyses the reaction (9Z,12Z)-octadecadienoyl-CoA + 1-hexadecanoyl-sn-glycero-3-phosphocholine = 1-hexadecanoyl-2-(9Z,12Z-octadecadienoyl)-sn-glycero-3-phosphocholine + CoA. The enzyme catalyses 1-dodecanoyl-sn-glycero-3-phosphocholine + (5Z,8Z,11Z,14Z)-eicosatetraenoyl-CoA = 1-dodecanoyl-2-(5Z,8Z,11Z,14Z)-eicosatetraenoyl-sn-glycero-3-phosphocholine + CoA. The catalysed reaction is (5Z,8Z,11Z,14Z)-eicosatetraenoyl-CoA + 1-hexadecanoyl-sn-glycero-3-phosphocholine = 1-hexadecanoyl-2-(5Z,8Z,11Z,14Z-eicosatetraenoyl)-sn-glycero-3-phosphocholine + CoA. It carries out the reaction 1-octadecanoyl-sn-glycero-3-phosphocholine + (5Z,8Z,11Z,14Z)-eicosatetraenoyl-CoA = 1-octadecanoyl-2-(5Z,8Z,11Z,14Z-eicosatetraenoyl)-sn-glycero-3-phosphocholine + CoA. It catalyses the reaction 1-eicosanoyl-sn-glycero-3-phosphocholine + (5Z,8Z,11Z,14Z)-eicosatetraenoyl-CoA = 1-eicosanoyl-2-(5Z,8Z,11Z,14Z)-eicosatetraenoyl-sn-glycero-3-phosphocholine + CoA. The enzyme catalyses 1-(9Z-octadecenoyl)-sn-glycero-3-phosphocholine + (9Z)-octadecenoyl-CoA = 1,2-di-(9Z-octadecenoyl)-sn-glycero-3-phosphocholine + CoA. The catalysed reaction is 1-(9Z-octadecenoyl)-sn-glycero-3-phosphocholine + (9Z,12Z)-octadecadienoyl-CoA = 1-(9Z)-octadecenoyl-2-(9Z,12Z)-octadecadienoyl-sn-glycero-3-phosphocholine + CoA. It carries out the reaction 1-(9Z-octadecenoyl)-sn-glycero-3-phosphocholine + (5Z,8Z,11Z,14Z)-eicosatetraenoyl-CoA = 1-(9Z)-octadecenoyl-2-(5Z,8Z,11Z,14Z)-icosatetraenoyl-sn-glycero-3-phosphocholine + CoA. It catalyses the reaction a 1-acyl-sn-glycero-3-phosphoethanolamine + (9Z,12Z)-octadecadienoyl-CoA = 1-acyl-2-(9Z,12Z)-octadecadienoyl-sn-glycero-3-phosphoethanolamine + CoA. The enzyme catalyses 1-(9Z-octadecenoyl)-sn-glycero-3-phosphoethanolamine + (9Z,12Z)-octadecadienoyl-CoA = 1-(9Z)-octadecenoyl-2-(9Z,12Z)-octadecadienoyl-sn-glycero-3-phosphoethanolamine + CoA. The catalysed reaction is 1-(10Z-heptadecenoyl)-sn-glycero-3-phosphoethanolamine + (9Z,12Z)-octadecadienoyl-CoA = 1-(10Z-heptadecenoyl)-2-(9Z,12Z-octadecadienoyl)-sn-glycero-3-phosphoethanolamine + CoA. It carries out the reaction a 1-acyl-sn-glycero-3-phosphoethanolamine + (5Z,8Z,11Z,14Z)-eicosatetraenoyl-CoA = 1-acyl-2-(5Z,8Z,11Z,14Z)-eicosatetraenoyl-sn-glycero-3-phosphoethanolamine + CoA. It catalyses the reaction 1-hexadecanoyl-sn-glycero-3-phosphoethanolamine + (5Z,8Z,11Z,14Z)-eicosatetraenoyl-CoA = 1-hexadecanoyl-2-(5Z,8Z,11Z,14Z-eicosatetraenoyl)-sn-glycero-3-phosphoethanolamine + CoA. The enzyme catalyses 1-(9Z-octadecenoyl)-sn-glycero-3-phosphoethanolamine + (5Z,8Z,11Z,14Z)-eicosatetraenoyl-CoA = 1-(9Z)-octadecenoyl-2-(5Z,8Z,11Z,14Z)-eicosatetraenoyl-sn-glycero-3-phosphoethanolamine + CoA. The catalysed reaction is 1-(10Z-heptadecenoyl)-sn-glycero-3-phosphoethanolamine + (5Z,8Z,11Z,14Z)-eicosatetraenoyl-CoA = 1-(10Z-heptadecenoyl)-2-(5Z,8Z,11Z,14Z-eicosatetraenoyl)-sn-glycero-3-phosphoethanolamine + CoA. It carries out the reaction a 1-O-(1Z-alkenyl)-sn-glycero-3-phosphoethanolamine + (5Z,8Z,11Z,14Z)-eicosatetraenoyl-CoA = 1-O-(1Z)-alkenyl-2-(5Z,8Z,11Z,14Z)-eicosatetraenoyl-sn-glycero-3-phosphoethanolamine + CoA. It catalyses the reaction a 1-acyl-sn-glycero-3-phospho-L-serine + (9Z,12Z)-octadecadienoyl-CoA = 1-acyl-2-(9Z,12Z-octadecadienoyl)-sn-glycero-3-phospho-L-serine + CoA. The enzyme catalyses a 1-acyl-sn-glycero-3-phospho-L-serine + (5Z,8Z,11Z,14Z)-eicosatetraenoyl-CoA = 1-acyl-2-(5Z,8Z,11Z,14Z-eicosatetraenoyl)-sn-glycero-3-phospho-L-serine + CoA. The catalysed reaction is 1-hexadecanoyl-sn-glycero-3-phospho-L-serine + (9Z)-octadecenoyl-CoA = 1-hexadecanoyl-2-(9Z-octadecenoyl)-sn-glycero-3-phospho-L-serine + CoA. It carries out the reaction 1-(9Z-octadecenoyl)-sn-glycero-3-phospho-L-serine + (9Z)-octadecenoyl-CoA = 1,2-di-(9Z)-octadecenoyl-sn-glycero-3-phospho-L-serine + CoA. It catalyses the reaction 1-hexadecanoyl-sn-glycero-3-phospho-L-serine + (9Z,12Z)-octadecadienoyl-CoA = 1-hexadecanoyl-2-(9Z,12Z-octadecadienoyl)-sn-glycero-3-phospho-L-serine + CoA. The enzyme catalyses 1-(9Z-octadecenoyl)-sn-glycero-3-phospho-L-serine + (9Z,12Z)-octadecadienoyl-CoA = 1-(9Z-octadecenoyl)-2-(9Z,12Z-octadienoyl)-sn-glycero-3-phospho-L-serine + CoA. The catalysed reaction is 1-hexadecanoyl-sn-glycero-3-phospho-L-serine + (5Z,8Z,11Z,14Z)-eicosatetraenoyl-CoA = 1-hexadecanoyl-2-(5Z,8Z,11Z,14Z-eicosatetraenoyl)-sn-glycero-3-phospho-L-serine + CoA. It carries out the reaction 1-(9Z-octadecenoyl)-sn-glycero-3-phospho-L-serine + (5Z,8Z,11Z,14Z)-eicosatetraenoyl-CoA = 1-(9Z-octadecenoyl)-2-(5Z,8Z,11Z,14Z-eicosatetraenoyl)-sn-glycero-3-phospho-L-serine + CoA. It functions in the pathway lipid metabolism; phospholipid metabolism. Its function is as follows. Lysophospholipid O-acyltransferase (LPLAT) that catalyzes the reacylation step of the phospholipid remodeling process also known as the Lands cycle. Catalyzes transfer of the fatty acyl chain from fatty acyl-CoA to 1-acyl lysophospholipid to form various classes of phospholipids. Converts 1-acyl lysophosphatidylcholine (LPC) into phosphatidylcholine (PC) (LPCAT activity), 1-acyl lysophosphatidylserine (LPS) into phosphatidylserine (PS) (LPSAT activity) and 1-acyl lysophosphatidylethanolamine (LPE) into phosphatidylethanolamine (PE) (LPEAT activity). Favors polyunsaturated fatty acyl-CoAs as acyl donors compared to saturated fatty acyl-CoAs. Has higher activity for LPC acyl acceptors compared to LPEs and LPSs. Can also transfer the fatty acyl chain from fatty acyl-CoA to 1-O-alkyl lysophospholipid or 1-O-alkenyl lysophospholipid with lower efficiency. Acts as a major LPC O-acyltransferase in liver and intestine. As a component of the liver X receptor/NR1H3 or NR1H2 signaling pathway, mainly catalyzes the incorporation of arachidonate into PCs of endoplasmic reticulum (ER) membranes, increasing membrane dynamics and enabling triacylglycerols transfer to nascent very low-density lipoprotein (VLDL) particles. Promotes processing of sterol regulatory protein SREBF1 in hepatocytes, likely by facilitating the translocation of SREBF1-SCAP complex from ER to the Golgi apparatus. Participates in mechanisms by which the liver X receptor/NR1H3 or NR1H2 signaling pathway counteracts lipid-induced ER stress response and inflammation. Down-regulates hepatic inflammation by limiting arachidonic acid availability for synthesis of inflammatory eicosanoids, such as prostaglandins. In enterocytes, acts as a component of a gut-brain feedback loop that coordinates dietary lipid absorption and food intake. Regulates the abundance of PCs containing linoleate and arachidonate in enterocyte membranes, enabling passive diffusion of fatty acids and cholesterol across the membrane for efficient chylomicron assembly. In the intestinal crypt, acts as a component of dietary-responsive phospholipid-cholesterol axis, regulating the biosynthesis of cholesterol and its mitogenic effects on intestinal stem cells. The protein is Lysophospholipid acyltransferase 5 (Lpcat3) of Mus musculus (Mouse).